A 938-amino-acid polypeptide reads, in one-letter code: MDQKGASGSRPNRLSQGKEAYACERSATVSVAANRNNIINEMAKICEADRQTSAIARRTQVHERLAVANSDFVAVEDLILAYAEPTPEDQVEMIMRDFCSSPTYEEDEDEPSFESEPWFRFRNKRIRTYSRKRDPRSYMAVRTEKPRGTSGLSVQRDLNTSFTSMACDFDAASSQKIHEVLLNLSQYFSATAKTSSPTPVPSQIDLPTEARQDSGKECFNAEVENLRDDLLQNGFTFEASIYDNEHEQEGSEKFNVCSDAEIAEHKKLLKGPTQAEHVGKEENPNFILEGIPLSEWLTPMEPPMISKDVIKNIPDKKVKLEPSFQKEQKSSKDSNESKIRAPSKPSCDITEKNEGTTVLDQPYAAQQENLSNDGDLLEEFLFNEWHPMQCSNGPSTSNDAIQVPKEEINSIKRTDEEQPEKETPNKSRSTSSHQLSFRKTSLKFIEISEEMKIKGEKFVDKVISGLYHPSHKCNLRTEEYSDNHSQVMESTQCVEFKSALNKPIELLDKKETYDMLAKVEVGEINGKCSPLNNEAIAEPEFCGFRTASNKAIPISEKMKIKTAEFMAEFQYKETNHQNDYLVNQPNDNSTSVGLDTVLKKSIEISEEMPTKASKLVVVDTRLGEPHQPTLDPVCSDLNEPQFFGFRTASKKAIEITEAMEKRGAMFLAQSRATDQQAEWQPSDFPDIPHTSPKNEIHSINVENNKAVHTKTASETEFFGFRTASNKGIVISENTKMKVAQFMSEFQAADASTDSNKPIVISEEPSNIAAKFVDEAAAEDSPSKSTFCNVQSQENPLNIEHFKHDLFVKRSAKEEHPLCSQPLVRTPRRSLEIHSSLSQLAGQSPLDQATKKSVIARRNLLSLKRKRKIVSSTETSTSCASPDMERFAPKPSSTSTPLADRDLNRSKDCAKNRQDAEDMSPICMQPKKSRRLGLSRSRY.

Composition is skewed to basic and acidic residues over residues 320 to 339 and 409 to 425; these read LEPSFQKEQKSSKDSNESKI and NSIKRTDEEQPEKETPN. 2 disordered regions span residues 320-359 and 409-434; these read LEPSFQKEQKSSKDSNESKIRAPSKPSCDITEKNEGTTVL and NSIKRTDEEQPEKETPNKSRSTSSHQ. BRCA2 repeat units lie at residues 537–571, 638–672, and 713–747; these read AEPEFCGFRTASNKAIPISEKMKIKTAEFMAEFQY, NEPQFFGFRTASKKAIEITEAMEKRGAMFLAQSRA, and SETEFFGFRTASNKGIVISENTKMKVAQFMSEFQA. Positions 870–879 are enriched in polar residues; it reads SSTETSTSCA. Residues 870 to 938 form a disordered region; it reads SSTETSTSCA…RRLGLSRSRY (69 aa). The segment covering 898 to 915 has biased composition (basic and acidic residues); the sequence is ADRDLNRSKDCAKNRQDA. The segment covering 926 to 938 has biased composition (basic residues); the sequence is KKSRRLGLSRSRY.

Interacts with Rad9 and spn-A/Rad51.

The protein localises to the nucleus. Its function is as follows. Involved in and required for double-strand break repair by meiotic and mitotic homologous recombination. During meiosis, has a dual role in the repair of meiotic double-stranded breaks and the efficient activation of the meiotic recombination checkpoint. The protein is Breast cancer type 2 susceptibility protein homolog of Drosophila sechellia (Fruit fly).